A 437-amino-acid chain; its full sequence is GTPase Der (437 aa).

EngA-type G domains follow at residues 4–168 (PVVA…PAED) and 177–352 (IRVS…QAHS). Residues 10–17 (GRPNVGKS), 57–61 (DTGGI), 120–123 (NKAD), 183–190 (GRPNVGKS), 230–234 (DTAGM), and 295–298 (NKWD) each bind GTP. A KH-like domain is found at 353-437 (MRIPTAVLND…PVRIWTRKKT (85 aa)).

It belongs to the TRAFAC class TrmE-Era-EngA-EngB-Septin-like GTPase superfamily. EngA (Der) GTPase family. As to quaternary structure, associates with the 50S ribosomal subunit.

In terms of biological role, GTPase that plays an essential role in the late steps of ribosome biogenesis. This chain is GTPase Der, found in Brevibacillus brevis (strain 47 / JCM 6285 / NBRC 100599).